The sequence spans 160 residues: Large ribosomal subunit protein uL30m (160 aa).

A mitochondrion-targeting transit peptide spans 1–34 (MAGVLRSAFPRPPCRLQTVKKGAESLIGTEWIRH). The interval 44-64 (KVFQPKPEDHEKYGGDPQNPH) is disordered.

The protein belongs to the universal ribosomal protein uL30 family. In terms of assembly, component of the mitochondrial ribosome large subunit (39S) which comprises a 16S rRNA and about 50 distinct proteins.

The protein resides in the mitochondrion. The polypeptide is Large ribosomal subunit protein uL30m (Mrpl30) (Mus musculus (Mouse)).